The primary structure comprises 182 residues: Glutamyl-tRNA(Gln) amidotransferase subunit F, mitochondrial (182 aa).

This sequence belongs to the GatF family. In terms of assembly, subunit of the heterotrimeric GatFAB amidotransferase (AdT) complex, composed of A, B and F subunits.

It localises to the mitochondrion inner membrane. It carries out the reaction L-glutamyl-tRNA(Gln) + L-glutamine + ATP + H2O = L-glutaminyl-tRNA(Gln) + L-glutamate + ADP + phosphate + H(+). Its function is as follows. Allows the formation of correctly charged Gln-tRNA(Gln) through the transamidation of misacylated Glu-tRNA(Gln) in the mitochondria. The reaction takes place in the presence of glutamine and ATP through an activated gamma-phospho-Glu-tRNA(Gln). Required for proper protein synthesis within the mitochondrion. The polypeptide is Glutamyl-tRNA(Gln) amidotransferase subunit F, mitochondrial (Candida tropicalis (strain ATCC MYA-3404 / T1) (Yeast)).